A 410-amino-acid chain; its full sequence is MYQSMNLSFSSNFTNLSFLKPRLYSGISARAPKSLHFKFNPSCVSSGPKSDDSPLSEKLISLLKAVPNWSDGIKERRMQQKRSLYTHENWVRHRSSLRHLRHVSSSPSSRVILSLIPPVFFFTTVAILIAGYNSAVDLDWLPDFFPVLRASPLPYQLTAPALALLLVFRTEASYSRFEQGRKAWVKIISGTNDLARLVISSVHGSGDELIIRDALLRYIVAFPVALKCHVIYGSDIASDLKNVIEVDDLSLILQSKHRPRCVIQFISQSLQLLNLDSTKIDMLETKMMQLQEGIGVCEQLMGIPIPLSYTRLTSRFLVLWHLTLPVILWDDCHWNVVPATFISAASLFCIEEVGVLIEEPFSMLALDELCAMVLSNSDEAVESKEVIRNRIIAKKRILEIKHSSNGWHKS.

The Lumenal, thylakoid segment spans residues 1–110 (MYQSMNLSFS…RHVSSSPSSR (110 aa)). A helical membrane pass occupies residues 111 to 131 (VILSLIPPVFFFTTVAILIAG). Residues 132–147 (YNSAVDLDWLPDFFPV) lie on the Stromal side of the membrane. A helical membrane pass occupies residues 148 to 168 (LRASPLPYQLTAPALALLLVF). At 169-315 (RTEASYSRFE…PLSYTRLTSR (147 aa)) the chain is on the lumenal, thylakoid side. 2 helical membrane-spanning segments follow: residues 316 to 336 (FLVLWHLTLPVILWDDCHWNV) and 337 to 357 (VPATFISAASLFCIEEVGVLI). Residues 358 to 410 (EEPFSMLALDELCAMVLSNSDEAVESKEVIRNRIIAKKRILEIKHSSNGWHKS) are Lumenal, thylakoid-facing.

It belongs to the anion channel-forming bestrophin (TC 1.A.46) family. Voltage-dependent chloride channel subfamily. Mostly expressed in flowers and, to a lower extent, in leaves, stems and roots.

The protein resides in the plastid. The protein localises to the chloroplast thylakoid membrane. It catalyses the reaction chloride(in) = chloride(out). Functionally, voltage-dependent chloride (Cl) channel probably contributing to proton motive force (PMF) partitioning across the thylakoid membrane by anion influx into the lumen. Influences thylakoid ultrastructure, including lumen size and organization. This chain is Voltage-dependent chloride channel 2, chloroplastic, found in Arabidopsis thaliana (Mouse-ear cress).